The sequence spans 245 residues: Orotidine 5'-phosphate decarboxylase (245 aa).

Substrate is bound by residues aspartate 22, lysine 44, 71-80, threonine 131, arginine 192, glutamine 201, glycine 221, and arginine 222; that span reads DLKFHDIPNT. Lysine 73 (proton donor) is an active-site residue.

The protein belongs to the OMP decarboxylase family. Type 1 subfamily. In terms of assembly, homodimer.

The enzyme catalyses orotidine 5'-phosphate + H(+) = UMP + CO2. The protein operates within pyrimidine metabolism; UMP biosynthesis via de novo pathway; UMP from orotate: step 2/2. Functionally, catalyzes the decarboxylation of orotidine 5'-monophosphate (OMP) to uridine 5'-monophosphate (UMP). The polypeptide is Orotidine 5'-phosphate decarboxylase (Escherichia coli O127:H6 (strain E2348/69 / EPEC)).